Here is a 107-residue protein sequence, read N- to C-terminus: Nucleoid-associated protein RC1337 (107 aa).

This sequence belongs to the YbaB/EbfC family. Homodimer.

The protein localises to the cytoplasm. Its subcellular location is the nucleoid. Functionally, binds to DNA and alters its conformation. May be involved in regulation of gene expression, nucleoid organization and DNA protection. This is Nucleoid-associated protein RC1337 from Rickettsia conorii (strain ATCC VR-613 / Malish 7).